The sequence spans 313 residues: Porphobilinogen deaminase (313 aa).

Position 241 is an S-(dipyrrolylmethanemethyl)cysteine (Cys241).

This sequence belongs to the HMBS family. As to quaternary structure, monomer. Dipyrromethane serves as cofactor.

It catalyses the reaction 4 porphobilinogen + H2O = hydroxymethylbilane + 4 NH4(+). It participates in porphyrin-containing compound metabolism; protoporphyrin-IX biosynthesis; coproporphyrinogen-III from 5-aminolevulinate: step 2/4. In terms of biological role, tetrapolymerization of the monopyrrole PBG into the hydroxymethylbilane pre-uroporphyrinogen in several discrete steps. The sequence is that of Porphobilinogen deaminase from Idiomarina loihiensis (strain ATCC BAA-735 / DSM 15497 / L2-TR).